We begin with the raw amino-acid sequence, 189 residues long: GTP cyclohydrolase 1 (189 aa).

Zn(2+)-binding residues include C78, H81, and C150.

Belongs to the GTP cyclohydrolase I family. As to quaternary structure, toroid-shaped homodecamer, composed of two pentamers of five dimers.

It carries out the reaction GTP + H2O = 7,8-dihydroneopterin 3'-triphosphate + formate + H(+). The protein operates within cofactor biosynthesis; 7,8-dihydroneopterin triphosphate biosynthesis; 7,8-dihydroneopterin triphosphate from GTP: step 1/1. The protein is GTP cyclohydrolase 1 of Listeria welshimeri serovar 6b (strain ATCC 35897 / DSM 20650 / CCUG 15529 / CIP 8149 / NCTC 11857 / SLCC 5334 / V8).